Consider the following 458-residue polypeptide: F-box/WD repeat-containing protein 9 (458 aa).

Residue methionine 1 is modified to N-acetylmethionine. Disordered stretches follow at residues 1-30 (MELPLGRCDDSRTWDDDSDPESETDPDAQA) and 42-64 (KSGLAFSRPSQLSTPAASPSASE). Residues 16 to 26 (DDSDPESETDP) show a composition bias toward acidic residues. At serine 18 the chain carries Phosphoserine. Threonine 55 is subject to Phosphothreonine. Phosphoserine is present on serine 59. The F-box domain occupies 76 to 123 (EPGLLSLPPELLLEICSYLDARLVLHVLSRVCHALRDLVSDHVTWRLR). 7 WD repeats span residues 171-210 (GHVASVDSVLLLQGGSLCLSGSRDRNVNLWDLRQLGTESN), 220-261 (KRNS…QQFG), 264-301 (KASSAVLCLSYLPDILVTGTYDKKVTIYDPRAGPALLK), 305-342 (LHSRPVLTLLADDRHIISGSEDHTLVVVDRRANSVLQR), 344-381 (QLDSYLLCMSYQEPQLWAGDNQGLLHVFANRNGCFQLI), 387-424 (GHSFPITGIQYSVGALYTTSTDKTIRVHVPTDPPRTIC), and 427-458 (RHDNGLNRVCAEGNLVVAGSGDLSLEVWRLQA).

Interacts with SKP1 and CUL1.

Its function is as follows. Substrate-recognition component of the SCF (SKP1-CUL1-F-box protein)-type E3 ubiquitin ligase complex. This is F-box/WD repeat-containing protein 9 (FBXW9) from Homo sapiens (Human).